Reading from the N-terminus, the 92-residue chain is Signal recognition particle 19 kDa protein (92 aa).

This sequence belongs to the SRP19 family. Part of the signal recognition particle protein translocation system, which is composed of SRP and FtsY. Archaeal SRP consists of a 7S RNA molecule of 300 nucleotides and two protein subunits: SRP54 and SRP19.

Its subcellular location is the cytoplasm. Its function is as follows. Involved in targeting and insertion of nascent membrane proteins into the cytoplasmic membrane. Binds directly to 7S RNA and mediates binding of the 54 kDa subunit of the SRP. The sequence is that of Signal recognition particle 19 kDa protein from Halorubrum lacusprofundi (strain ATCC 49239 / DSM 5036 / JCM 8891 / ACAM 34).